We begin with the raw amino-acid sequence, 90 residues long: Small ribosomal subunit protein bS20 (90 aa).

It belongs to the bacterial ribosomal protein bS20 family.

In terms of biological role, binds directly to 16S ribosomal RNA. This chain is Small ribosomal subunit protein bS20, found in Desulfitobacterium hafniense (strain DSM 10664 / DCB-2).